An 81-amino-acid chain; its full sequence is Large ribosomal subunit protein bL31B (81 aa).

The protein belongs to the bacterial ribosomal protein bL31 family. Type B subfamily. In terms of assembly, part of the 50S ribosomal subunit.

The sequence is that of Large ribosomal subunit protein bL31B from Lactococcus lactis subsp. cremoris (strain MG1363).